The following is a 629-amino-acid chain: 1-deoxy-D-xylulose-5-phosphate synthase (629 aa).

Thiamine diphosphate is bound by residues His-72 and 113–115; that span reads GHA. Asp-144 serves as a coordination point for Mg(2+). Thiamine diphosphate-binding positions include 145 to 146, Asn-174, Tyr-287, and Glu-370; that span reads GA. Asn-174 is a binding site for Mg(2+).

This sequence belongs to the transketolase family. DXPS subfamily. In terms of assembly, homodimer. The cofactor is Mg(2+). It depends on thiamine diphosphate as a cofactor.

It carries out the reaction D-glyceraldehyde 3-phosphate + pyruvate + H(+) = 1-deoxy-D-xylulose 5-phosphate + CO2. Its pathway is metabolic intermediate biosynthesis; 1-deoxy-D-xylulose 5-phosphate biosynthesis; 1-deoxy-D-xylulose 5-phosphate from D-glyceraldehyde 3-phosphate and pyruvate: step 1/1. In terms of biological role, catalyzes the acyloin condensation reaction between C atoms 2 and 3 of pyruvate and glyceraldehyde 3-phosphate to yield 1-deoxy-D-xylulose-5-phosphate (DXP). The sequence is that of 1-deoxy-D-xylulose-5-phosphate synthase from Prochlorococcus marinus (strain MIT 9215).